The sequence spans 257 residues: Imidazole glycerol phosphate synthase subunit HisF (257 aa).

Residues D11 and D130 contribute to the active site.

This sequence belongs to the HisA/HisF family. Heterodimer of HisH and HisF.

Its subcellular location is the cytoplasm. The enzyme catalyses 5-[(5-phospho-1-deoxy-D-ribulos-1-ylimino)methylamino]-1-(5-phospho-beta-D-ribosyl)imidazole-4-carboxamide + L-glutamine = D-erythro-1-(imidazol-4-yl)glycerol 3-phosphate + 5-amino-1-(5-phospho-beta-D-ribosyl)imidazole-4-carboxamide + L-glutamate + H(+). Its pathway is amino-acid biosynthesis; L-histidine biosynthesis; L-histidine from 5-phospho-alpha-D-ribose 1-diphosphate: step 5/9. IGPS catalyzes the conversion of PRFAR and glutamine to IGP, AICAR and glutamate. The HisF subunit catalyzes the cyclization activity that produces IGP and AICAR from PRFAR using the ammonia provided by the HisH subunit. This chain is Imidazole glycerol phosphate synthase subunit HisF, found in Photobacterium profundum (strain SS9).